The chain runs to 131 residues: Large ribosomal subunit protein bL17 (131 aa).

It belongs to the bacterial ribosomal protein bL17 family. In terms of assembly, part of the 50S ribosomal subunit. Contacts protein L32.

The chain is Large ribosomal subunit protein bL17 from Methylibium petroleiphilum (strain ATCC BAA-1232 / LMG 22953 / PM1).